The following is a 115-amino-acid chain: U3-lycotoxin-Ls1l (115 aa).

Positions 1-20 (MKFVLLFGVLLVTLFSYSSA) are cleaved as a signal peptide. A propeptide spanning residues 21-44 (EMLDDFDQADEDELLSLIEKEEAR) is cleaved from the precursor. 3 cysteine pairs are disulfide-bonded: C55–C72, C62–C87, and C74–C85.

It belongs to the neurotoxin 19 (CSTX) family. 01 subfamily. As to expression, expressed by the venom gland.

It localises to the secreted. The chain is U3-lycotoxin-Ls1l from Lycosa singoriensis (Wolf spider).